Reading from the N-terminus, the 285-residue chain is Nucleotide-binding protein Cphy_0331 (285 aa).

8–15 lines the ATP pocket; it reads GMSGAGKS. 59 to 62 lines the GTP pocket; the sequence is DIRS.

The protein belongs to the RapZ-like family.

Functionally, displays ATPase and GTPase activities. This is Nucleotide-binding protein Cphy_0331 from Lachnoclostridium phytofermentans (strain ATCC 700394 / DSM 18823 / ISDg) (Clostridium phytofermentans).